Consider the following 180-residue polypeptide: D-glycero-beta-D-manno-heptose-1,7-bisphosphate 7-phosphatase (180 aa).

D14 acts as the Nucleophile in catalysis. Positions 14 and 16 each coordinate Mg(2+). Substrate is bound by residues 14-16, 22-25, and 56-59; these read DRD, NDHY, and TNQS. D16 functions as the Proton donor in the catalytic mechanism. Zn(2+) is bound by residues C95, H97, C110, and H112. 113-114 is a binding site for substrate; it reads RK. D139 serves as a coordination point for Mg(2+).

Belongs to the gmhB family. In terms of assembly, monomer. Requires Mg(2+) as cofactor.

The protein resides in the cytoplasm. The enzyme catalyses D-glycero-beta-D-manno-heptose 1,7-bisphosphate + H2O = D-glycero-beta-D-manno-heptose 1-phosphate + phosphate. It functions in the pathway nucleotide-sugar biosynthesis; ADP-L-glycero-beta-D-manno-heptose biosynthesis; ADP-L-glycero-beta-D-manno-heptose from D-glycero-beta-D-manno-heptose 7-phosphate: step 2/4. It participates in bacterial outer membrane biogenesis; LPS core biosynthesis. Functionally, converts the D-glycero-beta-D-manno-heptose 1,7-bisphosphate (beta-HBP) intermediate into D-glycero-beta-D-manno-heptose 1-phosphate by removing the phosphate group at the C-7 position. Also catalyzes the dephosphorylation of D-glycero-alpha-D-manno-heptose 1,7-bisphosphate in vitro. The chain is D-glycero-beta-D-manno-heptose-1,7-bisphosphate 7-phosphatase from Rhodopseudomonas palustris (strain ATCC BAA-98 / CGA009).